Consider the following 580-residue polypeptide: FAD-dependent monooxygenase DEP4 (580 aa).

47–50 contacts FAD; that stretch reads VWSK. An NADP(+)-binding site is contributed by 58–60; sequence FAQ. Valine 112 contacts FAD. NADP(+) is bound by residues 186-205, 222-223, and 354-355; these read VGRS…AGKK, AP, and DI. Residue methionine 473 participates in FAD binding.

Belongs to the FAD-binding monooxygenase family. FAD is required as a cofactor.

It functions in the pathway polyketide biosynthesis. Part of the gene cluster that mediates the biosynthesis of depudecin, a highly oxidized eleven-carbon linear polyketide that acts as a histone deacetylase (HDAC) inhibitor and makes a small contribution to pathogenesis. The reducing polyketide synthase DEP5 is the central enzyme in depudecin biosynthesis by yielding the backbone polyketide chain. The monooxygenases DEP2 and DEP4, as well as the uncharacterized protein DEP1, then act as tailoring enzymes to modify the intermediate polyketide chain into depudecin. The chain is FAD-dependent monooxygenase DEP4 from Fusarium langsethiae.